The sequence spans 90 residues: MTRTVMCRKYKEQLPGLERPPYPGAKGQDIFEHISQQAWADWQKHQTMLINEKRLNMMNAEDRKYLQGEMDKFFAGEDYAQAEGYVPPAE.

This sequence belongs to the Fe(2+)-trafficking protein family.

Its function is as follows. Could be a mediator in iron transactions between iron acquisition and iron-requiring processes, such as synthesis and/or repair of Fe-S clusters in biosynthetic enzymes. The chain is Probable Fe(2+)-trafficking protein from Pseudomonas putida (strain W619).